Reading from the N-terminus, the 743-residue chain is Ectonucleotide pyrophosphatase/phosphodiesterase C27A7.3 (743 aa).

Topologically, residues 1 to 23 are cytoplasmic; it reads MSNRVVDVNSKKTGTSWKKKLMK. A helical; Signal-anchor for type II membrane protein transmembrane segment spans residues 24–44; sequence IVIWSLAMLSFIAGLVLLGLV. Topologically, residues 45-743 are lumenal; that stretch reads AAATISGSKN…LRRNITTSLW (699 aa). Zn(2+) is bound by residues aspartate 87 and threonine 123. Threonine 123 acts as the Nucleophile in catalysis. A glycan (N-linked (GlcNAc...) asparagine) is linked at asparagine 195. Aspartate 243, histidine 247, aspartate 286, and histidine 287 together coordinate Zn(2+). N-linked (GlcNAc...) asparagine glycans are attached at residues asparagine 293 and asparagine 320. Histidine 383 serves as a coordination point for Zn(2+). Asparagine 406, asparagine 434, and asparagine 536 each carry an N-linked (GlcNAc...) asparagine glycan. Residues aspartate 635, asparagine 637, aspartate 639, isoleucine 641, and aspartate 643 each contribute to the Ca(2+) site. Asparagine 737 carries an N-linked (GlcNAc...) asparagine glycan.

The protein belongs to the nucleotide pyrophosphatase/phosphodiesterase family. The cofactor is Zn(2+). Ca(2+) serves as cofactor.

It is found in the membrane. Probable phosphodiesterase. This Caenorhabditis elegans protein is Ectonucleotide pyrophosphatase/phosphodiesterase C27A7.3.